A 233-amino-acid polypeptide reads, in one-letter code: Large ribosomal subunit protein uL2 (233 aa).

Residues 195-233 (PHGGGNHQHVGRPSTVGRNAPPGRKVGRLSPKRRRVNGR) form a disordered region. Residues 219 to 233 (KVGRLSPKRRRVNGR) are compositionally biased toward basic residues.

This sequence belongs to the universal ribosomal protein uL2 family. Part of the 50S ribosomal subunit. Forms a bridge to the 30S subunit in the 70S ribosome.

Functionally, one of the primary rRNA binding proteins. Required for association of the 30S and 50S subunits to form the 70S ribosome, for tRNA binding and peptide bond formation. It has been suggested to have peptidyltransferase activity; this is somewhat controversial. Makes several contacts with the 16S rRNA in the 70S ribosome. The polypeptide is Large ribosomal subunit protein uL2 (Thermoplasma acidophilum (strain ATCC 25905 / DSM 1728 / JCM 9062 / NBRC 15155 / AMRC-C165)).